The following is a 151-amino-acid chain: FAD synthase (151 aa).

ATP is bound by residues 12–13 (TF), 17–20 (HPGH), aspartate 97, and tyrosine 125.

This sequence belongs to the archaeal FAD synthase family. As to quaternary structure, homodimer. A divalent metal cation is required as a cofactor.

The enzyme catalyses FMN + ATP + H(+) = FAD + diphosphate. It functions in the pathway cofactor biosynthesis; FAD biosynthesis; FAD from FMN: step 1/1. Its function is as follows. Catalyzes the transfer of the AMP portion of ATP to flavin mononucleotide (FMN) to produce flavin adenine dinucleotide (FAD) coenzyme. The protein is FAD synthase of Methanocaldococcus sp. (strain FS406-22).